A 227-amino-acid polypeptide reads, in one-letter code: uncharacterized protein (227 aa).

In terms of domain architecture, Response regulatory spans 2–115 (KILMIEDNVS…TLVARIKAVI (114 aa)). 4-aspartylphosphate is present on Asp-51. Positions 128-226 (EDMIETECFT…VWGVGYKFDE (99 aa)) form a DNA-binding region, ompR/PhoB-type.

Post-translationally, phosphorylated by YclK.

It localises to the cytoplasm. In terms of biological role, could be member of the two-component regulatory system YclK/YclJ. This is an uncharacterized protein from Bacillus subtilis (strain 168).